The chain runs to 1072 residues: DNA-directed RNA polymerase subunit beta (1072 aa).

Belongs to the RNA polymerase beta chain family. In plastids the minimal PEP RNA polymerase catalytic core is composed of four subunits: alpha, beta, beta', and beta''. When a (nuclear-encoded) sigma factor is associated with the core the holoenzyme is formed, which can initiate transcription.

The protein resides in the plastid. Its subcellular location is the chloroplast. It catalyses the reaction RNA(n) + a ribonucleoside 5'-triphosphate = RNA(n+1) + diphosphate. DNA-dependent RNA polymerase catalyzes the transcription of DNA into RNA using the four ribonucleoside triphosphates as substrates. This Capsella bursa-pastoris (Shepherd's purse) protein is DNA-directed RNA polymerase subunit beta.